The chain runs to 757 residues: MDVNPTLLFLKVPAQNAISTTFPYTGDPPYSHGTGTGYTMDTVNRTHQYSERGRWTTNTETGAPQLNPIDGPLPEDNEPSGYAQTDCVLEAMAFLEESHPGIFENSCIETMEVVQQTRVDKLTQGRQTYDWTLNRNQPAATALANTIEVFRSNGLTANESGRLIDFLKDVMESMDKEEMEITTHFQRKRRVRDNVTKKMVTQRTIGKRKQRLNKRSYLIRALTLNTMTKDAERGKLKRRAIATPGMQIRGFVYFVETLARSICEKLEQSGLPVGGNEKKAKLANVVRKMMTNSQDTEISFTITGDNTKWNENQNPRMFLAMITYMTRNQPEWFRNVLSIAPIMFSNKMARLGKGYMFESKSMKLRTQIPAEMLANIDLKYFNDSTRKKIEKIRPLLIDGTASLSPGMMMGMFNMLSTVLGVSILNLGQKRYTKTTYWWDGLQSSDDFALIVNAPNHEGIQAGVDRFYRTCKLLGINMSKKKSYINRTGTFEFTSFFYRYGFVANFSMELPSFGVSGINESADMSIGVTVIKNNMINNDLGPATAQMALQLFIKDYRYTYRCHRGDTQIQTRRSFEIKKLWEQTRSKAGLLVSDGGPNLFNIRNLHIPEVCLKWELMDEDYQGRLCNPLNPFVSHKEIESVNNAVMMPAHGPAKNMEYDAVATTHSWIPKRNRSILNTSQRGILEDEQMYQRCCNLFEKFFPSSSYRRPVGISSMVEAMVSRARIDARIDFESGRIKKEEFTEIMKICSTIEELRRQK.

A disordered region spans residues 53–82 (GRWTTNTETGAPQLNPIDGPLPEDNEPSGY). Residues 55 to 64 (WTTNTETGAP) show a composition bias toward polar residues. Short sequence motifs (nuclear localization signal) lie at residues 187–195 (RKRRVRDNV) and 203–216 (RTIGKRKQRLNKRS). The interval 249-256 (RGFVYFVE) is promoter-binding site. A RdRp catalytic domain is found at 286 to 483 (VRKMMTNSQD…GINMSKKKSY (198 aa)).

It belongs to the influenza viruses polymerase PB1 family. Influenza RNA polymerase is composed of three subunits: PB1, PB2 and PA. Interacts (via N-terminus) with PA (via C-terminus). Interacts (via C-terminus) with PB2 (via N-terminus); this interaction is essential for transcription initiation. Interacts (via C-terminus) with human PKP2 (via N-terminus); the interaction competitively inhibits the interaction between the RNA polymerase subunits PB1 and PB2. In terms of processing, phosphorylated by host PRKCA.

It localises to the host nucleus. Its subcellular location is the host cytoplasm. It catalyses the reaction RNA(n) + a ribonucleoside 5'-triphosphate = RNA(n+1) + diphosphate. Functionally, RNA-dependent RNA polymerase which is responsible for replication and transcription of virus RNA segments. The transcription of viral mRNAs occurs by a unique mechanism called cap-snatching. 5' methylated caps of cellular mRNAs are cleaved after 10-13 nucleotides by PA. In turn, these short capped RNAs are used as primers by PB1 for transcription of viral mRNAs. During virus replication, PB1 initiates RNA synthesis and copy vRNA into complementary RNA (cRNA) which in turn serves as a template for the production of more vRNAs. The chain is RNA-directed RNA polymerase catalytic subunit from Influenza A virus (strain A/USA:Iowa/1943 H1N1).